A 213-amino-acid chain; its full sequence is uncharacterized protein (213 aa).

Residues S114, D162, and H194 each act as charge relay system in the active site.

Belongs to the AB hydrolase superfamily. AB hydrolase 2 family.

This is an uncharacterized protein from Rickettsia bellii (strain RML369-C).